The primary structure comprises 291 residues: GTPase Era (291 aa).

Residues Lys2–Glu167 form the Era-type G domain. Residues Gly10–Ser17 form a G1 region. Gly10 to Ser17 contributes to the GTP binding site. Residues Asn36–Arg40 form a G2 region. Residues Asp57–Gly60 form a G3 region. GTP is bound by residues Asp57–Leu61 and Asn116–Asp119. Residues Asn116–Asp119 form a G4 region. The G5 stretch occupies residues Tyr146 to Ser148. The region spanning Tyr186–Lys274 is the KH type-2 domain.

It belongs to the TRAFAC class TrmE-Era-EngA-EngB-Septin-like GTPase superfamily. Era GTPase family. In terms of assembly, monomer.

It localises to the cytoplasm. It is found in the cell inner membrane. In terms of biological role, an essential GTPase that binds both GDP and GTP, with rapid nucleotide exchange. Plays a role in 16S rRNA processing and 30S ribosomal subunit biogenesis and possibly also in cell cycle regulation and energy metabolism. This chain is GTPase Era, found in Campylobacter jejuni (strain RM1221).